A 334-amino-acid chain; its full sequence is Ferredoxin--NADP reductase (334 aa).

Residues D33, Q41, Y46, A86, F120, D286, and T327 each coordinate FAD.

The protein belongs to the ferredoxin--NADP reductase type 2 family. In terms of assembly, homodimer. FAD serves as cofactor.

The catalysed reaction is 2 reduced [2Fe-2S]-[ferredoxin] + NADP(+) + H(+) = 2 oxidized [2Fe-2S]-[ferredoxin] + NADPH. The polypeptide is Ferredoxin--NADP reductase (Rickettsia akari (strain Hartford)).